The following is a 306-amino-acid chain: Phospho-N-acetylmuramoyl-pentapeptide-transferase (306 aa).

10 helical membrane-spanning segments follow: residues 1 to 21, 49 to 69, 75 to 95, 104 to 124, 130 to 150, 160 to 180, 182 to 202, 209 to 229, 234 to 254, and 284 to 304; these read MDIY…IIFP, GTPT…GLIL, LIFT…VSIV, AWQK…TILQ, IFGI…LVSG, GIDG…MFFS, SSME…FLVY, VFMG…YALM, LSLL…ILQV, and IVGV…AFFL.

This sequence belongs to the glycosyltransferase 4 family. MraY subfamily. Requires Mg(2+) as cofactor.

The protein resides in the cell inner membrane. It carries out the reaction UDP-N-acetyl-alpha-D-muramoyl-L-alanyl-gamma-D-glutamyl-meso-2,6-diaminopimeloyl-D-alanyl-D-alanine + di-trans,octa-cis-undecaprenyl phosphate = di-trans,octa-cis-undecaprenyl diphospho-N-acetyl-alpha-D-muramoyl-L-alanyl-D-glutamyl-meso-2,6-diaminopimeloyl-D-alanyl-D-alanine + UMP. It participates in cell wall biogenesis; peptidoglycan biosynthesis. Functionally, catalyzes the initial step of the lipid cycle reactions in the biosynthesis of the cell wall peptidoglycan: transfers peptidoglycan precursor phospho-MurNAc-pentapeptide from UDP-MurNAc-pentapeptide onto the lipid carrier undecaprenyl phosphate, yielding undecaprenyl-pyrophosphoryl-MurNAc-pentapeptide, known as lipid I. This Fervidobacterium nodosum (strain ATCC 35602 / DSM 5306 / Rt17-B1) protein is Phospho-N-acetylmuramoyl-pentapeptide-transferase.